A 405-amino-acid chain; its full sequence is N-methyltransferase nanE (405 aa).

Residues 238–239, Asp261, and 290–291 each bind S-adenosyl-L-methionine; these read GG and HH.

This sequence belongs to the class I-like SAM-binding methyltransferase superfamily. Cation-independent O-methyltransferase family.

It participates in secondary metabolite biosynthesis. Functionally, N-methyltransferase; part of the gene cluster that mediates the biosynthesis of the benzazepine alkaloid nanangelenin A which contains an unprecedented 3,4-dihydro-1-benzazepine-2,5-dione-N-prenyl-N-acetoxy-anthranilamide scaffold. The first step of nanangelenin biosynthesis is catalyzed by the indoleamine 2,3-dioxygenase nanC which produces N-formyl-kynurenine through the catabolism of tryptophan. The two-module NRPS nanA then utilizes anthranilate (Ant) and L-kynurenine (L-Kyn) to assemble the dipeptide product nanangelenin B. The first adenylation domain of nanA (A1) loads anthranilate onto the T1 domain, while A2 loads kynurenine, generated through spontaneous nonenzymatic deformylation of the nanC-supplied N-formyl-kynurenine. The peptide bond formation between the tethered amino acids is catalyzed by the first condensation domain (C1) between anthranilate's carbonyl carbon and kynurenine's aliphatic primary amine. The second C domain (C2) catalyzes the final cyclization event between the aromatic amine of kynurenine and the tethered carbonyl carbon, yielding nanangelenin B. The terminal T3 domain enhances the catalytic efficiency of C2, suggesting the T2-tethered Ant-L-Kyn is transferred to T3 prior to cyclization by C2. Once released from nanA, nanangelenin B is then prenylated by the prenyltransferase nanD to form nanangelenin C. Nanangelenin C is then N-hydroxylated by the FAD-dependent monooxygenase nanF and further acetylated by the acetyltransferase nanB to yield nanangelenin F. Finally, the N-methyltransferase nanE methylates the amide nitrogen of 1-benzazepine to convert nanangelenin F into nanangelenin A. NanE is also able to methylate most of the intermediates of the pathway such as nanangelenin B and nanangelenin C to produce nanangelenin D and nanangelenin E, respectively. This Aspergillus nanangensis protein is N-methyltransferase nanE.